Consider the following 248-residue polypeptide: Mannose-binding protein C (248 aa).

An N-terminal signal peptide occupies residues 1 to 20 (MSPFLSLPLLLLSVLSASYS). Residues 36 to 112 (IACSSPGING…GDSSLAASER (77 aa)) form a disordered region. The 58-residue stretch at 42–99 (GINGFPGKDGRDGTKGEKGEPGQGLRGLQGPPGKLGPPGNPGPSGSPGAKGQKGDPGA) folds into the Collagen-like domain. Pro47 carries the 4-hydroxyproline modification. Positions 49–61 (KDGRDGTKGEKGE) are enriched in basic and acidic residues. 4-hydroxyproline occurs at positions 73, 79, 82, and 88. Residues 112-130 (RKALQTEMARIKKWVTFSL) are a coiled coil. In terms of domain architecture, C-type lectin spans 134-245 (VGKKLFLSNG…CSSSHLAICE (112 aa)). Intrachain disulfides connect Cys155–Cys244 and Cys222–Cys236.

In terms of assembly, oligomeric complex of 3 or more homotrimers. Interacts with MASP1 and MASP2. Interacts with MEP1A and MEP1B and may inhibit their catalytic activity. Hydroxylation on proline residues within the sequence motif, GXPG, is most likely to be 4-hydroxy as this fits the requirement for 4-hydroxylation in vertebrates.

The protein resides in the secreted. In terms of biological role, calcium-dependent lectin involved in innate immune defense. Binds mannose, fucose and N-acetylglucosamine on different microorganisms and activates the lectin complement pathway. Binds to late apoptotic cells, as well as to apoptotic blebs and to necrotic cells, but not to early apoptotic cells, facilitating their uptake by macrophages. This is Mannose-binding protein C (MBL2) from Saguinus oedipus (Cotton-top tamarin).